The primary structure comprises 527 residues: Inorganic phosphate transporter 1-1 (527 aa).

Residues 1–21 lie on the Cytoplasmic side of the membrane; sequence MAGGQLNVLSTLDQAKTQWYH. The helical transmembrane segment at 22 to 42 threads the bilayer; sequence FMAIVIAGMGFFTDAYDLFCI. The Extracellular portion of the chain corresponds to 43–70; sequence SLVTKLLGRIYYTDDSKDTPGALPPNVS. The chain crosses the membrane as a helical span at residues 71-91; sequence AAVTGVALCGTLAGQLFFGWL. The Cytoplasmic segment spans residues 92-99; that stretch reads GDKLGRKS. Residues 100 to 120 form a helical membrane-spanning segment; that stretch reads VYGFTLILMVVCSVASGLSFG. Residues 121-124 are Extracellular-facing; that stretch reads SSAK. A helical membrane pass occupies residues 125-145; sequence GVVSTLCFFRFWLGFGIGGDY. Residues 146-163 are Cytoplasmic-facing; sequence PLSATIMSEYANKRTRGA. Residues 164 to 184 traverse the membrane as a helical segment; the sequence is FIAAVFAMQGFGILFGAIVAL. Residues 185 to 211 are Extracellular-facing; the sequence is AVSAGFRHAYPAPSYSDNHAASLVPQA. A helical membrane pass occupies residues 212-232; sequence DYVWRIILMFGTVPAALTYYW. Topologically, residues 233–292 are cytoplasmic; it reads RMKMPETARYTALIARNAKQAAADMSKVLHTQIEESADRAETVAVGGESWGLFSRQFLRR. A helical transmembrane segment spans residues 293 to 313; it reads HGLHLLATTSTWFLLDIAFYS. Over 314–348 the chain is Extracellular; it reads QNLFQKDIFSKVGWIPPAKTMNALEELYRIARAQA. The helical transmembrane segment at 349-369 threads the bilayer; that stretch reads LIALCGTIPGYWFTVAFIEIM. At 370-371 the chain is on the cytoplasmic side; it reads GR. A helical membrane pass occupies residues 372–392; it reads FWIQIMGFAMMTAFMLGLAIP. At 393-405 the chain is on the extracellular side; sequence YHHWTTPGHHTGF. The helical transmembrane segment at 406-426 threads the bilayer; the sequence is IVMYGFTFFFANFGPNSTTFI. The Cytoplasmic portion of the chain corresponds to 427–442; sequence VPAEIYPARLRSTCHG. The chain crosses the membrane as a helical span at residues 443-463; sequence ISAAAGKAGAIIGAFGFLYAA. Topologically, residues 464–481 are extracellular; that stretch reads QDQHKPEPGYPRGIGIKN. Residues 482 to 502 form a helical membrane-spanning segment; the sequence is ALFVLAGTNFLGTIMTLLVPE. Topologically, residues 503 to 527 are cytoplasmic; sequence SKGMSLEVISQEVADGDDEEAAYPK.

It belongs to the major facilitator superfamily. Phosphate:H(+) symporter (TC 2.A.1.9) family. Expressed in roots, stems and leaves.

The protein localises to the membrane. Functionally, high-affinity transporter for external inorganic phosphate. Required for phosphate acquisition in plant. The sequence is that of Inorganic phosphate transporter 1-1 (PHT1-1) from Oryza sativa subsp. japonica (Rice).